A 54-amino-acid chain; its full sequence is Kazal-type inhibitor-like protein (54 aa).

The Kazal-like domain maps to 1–54; that stretch reads MKVNCKGYPTKFCFGKPLPHCASDGKTYPNRCRFCNAFVKSHGLITLRYYGKCK. 3 disulfides stabilise this stretch: cysteine 5–cysteine 35, cysteine 13–cysteine 32, and cysteine 21–cysteine 53.

May form disulfide-linked dimers or trimers (in vitro). In terms of tissue distribution, expressed by the venom gland.

The protein resides in the secreted. In terms of biological role, partially inhibits trypsin in vitro at slightly acidic pH and concentrations in excess of 0.3 mM. Has no protease inhibitory activity at neutral or basic pH. Has no antibacterial activity. Shows no toxicity in vertebrates apart from transient paw edema in mouse. The protein is Kazal-type inhibitor-like protein of Bothriechis schlegelii (Eyelash palm pitviper).